A 200-amino-acid chain; its full sequence is Small ribosomal subunit protein mS38 (200 aa).

It belongs to the mitochondrion-specific ribosomal protein mS38 family. Component of the mitochondrial ribosome small subunit (28S) which comprises a 12S rRNA and about 30 distinct proteins. Interacts with Aurora-A. In terms of tissue distribution, ubiquitously expressed and especially highly expressed in heart, skeletal muscle and testis.

Its subcellular location is the mitochondrion matrix. The protein resides in the nucleus. Its function is as follows. May act as a negative regulator of Aurora-A kinase, by down-regulation through proteasome-dependent degradation. The chain is Small ribosomal subunit protein mS38 (Aurkaip1) from Mus musculus (Mouse).